Here is a 278-residue protein sequence, read N- to C-terminus: Putative phosphoenolpyruvate synthase regulatory protein (278 aa).

Gly-158–Thr-165 lines the ADP pocket.

This sequence belongs to the pyruvate, phosphate/water dikinase regulatory protein family. PSRP subfamily.

The enzyme catalyses [pyruvate, water dikinase] + ADP = [pyruvate, water dikinase]-phosphate + AMP + H(+). It catalyses the reaction [pyruvate, water dikinase]-phosphate + phosphate + H(+) = [pyruvate, water dikinase] + diphosphate. In terms of biological role, bifunctional serine/threonine kinase and phosphorylase involved in the regulation of the phosphoenolpyruvate synthase (PEPS) by catalyzing its phosphorylation/dephosphorylation. In Acinetobacter baumannii (strain AYE), this protein is Putative phosphoenolpyruvate synthase regulatory protein.